Consider the following 220-residue polypeptide: Large ribosomal subunit protein eL15 (220 aa).

The span at 197 to 207 (KKRHEASRGAR) shows a compositional bias: basic and acidic residues. The tract at residues 197–220 (KKRHEASRGARDPWQIAEKLKEEK) is disordered.

Belongs to the eukaryotic ribosomal protein eL15 family.

The sequence is that of Large ribosomal subunit protein eL15 from Desulfurococcus amylolyticus (strain DSM 18924 / JCM 16383 / VKM B-2413 / 1221n) (Desulfurococcus kamchatkensis).